Here is a 203-residue protein sequence, read N- to C-terminus: Biogenesis of lysosome-related organelles complex 1 subunit KXD1 (203 aa).

Residues methionine 1–serine 62 form a disordered region. The segment covering arginine 14–isoleucine 25 has biased composition (polar residues). The span at asparagine 49–glycine 61 shows a compositional bias: low complexity. A coiled-coil region spans residues lysine 126 to threonine 178.

This sequence belongs to the KXD1 family. As to quaternary structure, component of the biogenesis of lysosome-related organelles complex-1 (BLOC-1).

Its subcellular location is the endosome. Its function is as follows. Component of the biogenesis of lysosome-related organelles complex-1 (BLOC-1) involved in endosomal cargo sorting. This chain is Biogenesis of lysosome-related organelles complex 1 subunit KXD1 (KXD1), found in Candida glabrata (strain ATCC 2001 / BCRC 20586 / JCM 3761 / NBRC 0622 / NRRL Y-65 / CBS 138) (Yeast).